The sequence spans 323 residues: Polycomb complex protein BMI-1-B (323 aa).

The segment at 18-57 (CVLCGGYFIDAATIIECLHSFCKTCIVRYLETSKYCPICD) adopts an RING-type zinc-finger fold. A Nuclear localization signal motif is present at residues 81–95 (KLVPGLFKGEMKRRR). Residues 238–310 (PHTDRINNTS…HQNPFANRAR (73 aa)) are disordered. Low complexity predominate over residues 287–301 (HISSTINGTNSSSSH).

As to quaternary structure, component of a PRC1-like complex. Interacts with cbx4.

It localises to the nucleus. Its function is as follows. Component of a Polycomb group (PcG) multiprotein PRC1-like complex, a complex class required to maintain the transcriptionally repressive state of many genes, including Hox genes, throughout development. PcG PRC1 complex acts via chromatin remodeling and modification of histones; it mediates monoubiquitination of histone H2A 'Lys-119', rendering chromatin heritably changed in its expressibility. In the PRC1 complex, it is required to stimulate the E3 ubiquitin-protein ligase activity of rnf2. The protein is Polycomb complex protein BMI-1-B (bmi1b) of Xenopus laevis (African clawed frog).